The following is a 574-amino-acid chain: Septation ring formation regulator EzrA (574 aa).

Over 1-7 (MSSGIIL) the chain is Extracellular. Residues 8 to 26 (LIVAIVLLVIIAYLVGVII) form a helical membrane-spanning segment. The Cytoplasmic portion of the chain corresponds to 27–574 (RKRNDSLITS…YEKTREHIRF (548 aa)). 3 coiled-coil regions span residues 102 to 141 (NFIRAKHEINSVESQLNLVEEDIASIREALNILKEQEEKN), 274 to 350 (ELVT…ETES), and 459 to 520 (QLEA…SFEA).

This sequence belongs to the EzrA family.

The protein resides in the cell membrane. Its function is as follows. Negative regulator of FtsZ ring formation; modulates the frequency and position of FtsZ ring formation. Inhibits FtsZ ring formation at polar sites. Interacts either with FtsZ or with one of its binding partners to promote depolymerization. The sequence is that of Septation ring formation regulator EzrA from Streptococcus pyogenes serotype M3 (strain SSI-1).